A 734-amino-acid polypeptide reads, in one-letter code: Photosystem I P700 chlorophyll a apoprotein A2 (734 aa).

The next 8 helical transmembrane spans lie at 46-69, 135-158, 175-199, 273-291, 330-353, 369-395, 417-439, and 517-535; these read IFASHFGQLAIIFLWTSGNLFHVA, LYTGALFLLFLSAISLIAGWLHLQ, LNHHLSGLFGVSSLAWTGHLVHVAI, IAHHHLAIAFLFLVAGHMY, IHFQLGLALASLGVITSLVAQHMY, AALYTHHQYIAGFIMTGAFAHGAIFFI, AIKSHLSWVSLFLGFHTLGLYVH, and FLVHHAIALGLHTTTLILV. Residues C559 and C568 each contribute to the [4Fe-4S] cluster site. The next 2 membrane-spanning stretches (helical) occupy residues 575-596 and 643-665; these read AFYLAVFWMLNTIGWVTFYWHW and LSVWAWMFLFGHLVWATGFMFLI. The chlorophyll a site is built by H654, M662, and Y670. W671 provides a ligand contact to phylloquinone. A helical transmembrane segment spans residues 707-727; the sequence is LVGLAHFSVGYIFTYAAFLIA.

The protein belongs to the PsaA/PsaB family. The PsaA/B heterodimer binds the P700 chlorophyll special pair and subsequent electron acceptors. PSI consists of a core antenna complex that captures photons, and an electron transfer chain that converts photonic excitation into a charge separation. The eukaryotic PSI reaction center is composed of at least 11 subunits. Requires P700 is a chlorophyll a/chlorophyll a' dimer, A0 is one or more chlorophyll a, A1 is one or both phylloquinones and FX is a shared 4Fe-4S iron-sulfur center. as cofactor.

It is found in the plastid. The protein localises to the chloroplast thylakoid membrane. It carries out the reaction reduced [plastocyanin] + hnu + oxidized [2Fe-2S]-[ferredoxin] = oxidized [plastocyanin] + reduced [2Fe-2S]-[ferredoxin]. Its function is as follows. PsaA and PsaB bind P700, the primary electron donor of photosystem I (PSI), as well as the electron acceptors A0, A1 and FX. PSI is a plastocyanin-ferredoxin oxidoreductase, converting photonic excitation into a charge separation, which transfers an electron from the donor P700 chlorophyll pair to the spectroscopically characterized acceptors A0, A1, FX, FA and FB in turn. Oxidized P700 is reduced on the lumenal side of the thylakoid membrane by plastocyanin. This Drimys granadensis protein is Photosystem I P700 chlorophyll a apoprotein A2.